The primary structure comprises 290 residues: Glutamate racemase (290 aa).

Residues 32–33 and 64–65 contribute to the substrate site; these read DS and YG. Cys-96 functions as the Proton donor/acceptor in the catalytic mechanism. Residue 97 to 98 participates in substrate binding; it reads NT. Catalysis depends on Cys-208, which acts as the Proton donor/acceptor. Residue 209-210 coordinates substrate; that stretch reads TH.

The protein belongs to the aspartate/glutamate racemases family.

The catalysed reaction is L-glutamate = D-glutamate. The protein operates within cell wall biogenesis; peptidoglycan biosynthesis. In terms of biological role, provides the (R)-glutamate required for cell wall biosynthesis. The protein is Glutamate racemase of Sodalis glossinidius (strain morsitans).